The chain runs to 308 residues: Probable manganese-dependent inorganic pyrophosphatase (308 aa).

6 residues coordinate Mn(2+): H9, D13, D15, D75, H97, and D149.

Belongs to the PPase class C family. Requires Mn(2+) as cofactor.

The protein localises to the cytoplasm. The enzyme catalyses diphosphate + H2O = 2 phosphate + H(+). The protein is Probable manganese-dependent inorganic pyrophosphatase of Listeria monocytogenes serotype 4b (strain CLIP80459).